The chain runs to 527 residues: MISESLLLVFLIVFISASLLKLLFVRENKPKAHLKNPPSPPAIPIIGHLHLLKPLIHHSFRDLSLRYGPLLSLRIGSVKFIVASTPSLAQEFLKTNELTYSSRKMNMAINMVTYHNATFAFAPYDTYWKFMKKLSTTELLGNKTLGHFLPIRTREVHDIIQFLFHKSKAQESVNLTEALLSLSNNVISQMMLSIKSSGTDSQAEQARTLVREVTQIFGEFNVSDFLGFCKNLDLQGFRKRALDIHKRYDALLEKIISDREELRRKSKVDGCEDGDDEKVKDFLDILLDVAEQKECEVQLTRNHVKSLILDYFTAATDTTAISVEWTIAELFNNPKVLKKAQEEVDRVTGNTQLVCEADIPNLPYIHAIIKETMRLHPPIPMIMRKGIEDCVVNGNMIPKGSIVCVNIWAMGRDPNIWKNPLEFKPERFLEGEGSAIDTKGHHFELLPFGSGRRGCPGMPLAMRELPTIIGALIQCFEWKMLGSQGEILDHGRSLISMDERPGLTAPRANDLIGIPVARLNPTPFRQM.

Residues 5–25 (SLLLVFLIVFISASLLKLLFV) form a helical membrane-spanning segment. Cysteine 455 contributes to the heme binding site.

This sequence belongs to the cytochrome P450 family. Requires heme as cofactor.

It is found in the membrane. The catalysed reaction is a flavanone + reduced [NADPH--hemoprotein reductase] + O2 = a flavone + oxidized [NADPH--hemoprotein reductase] + 2 H2O + H(+). It participates in secondary metabolite biosynthesis; flavonoid biosynthesis. In terms of biological role, functions as a flavone synthase II (FNSII) that catalyzes the direct conversion of flavanones to flavones. In vitro, can convert liquiritigenin, naringenin and eriodictyol to 7,4'-dihydroxyflavone, apigenin and luteolin, respectively. The protein is Cytochrome P450 93B16 of Glycine max (Soybean).